We begin with the raw amino-acid sequence, 389 residues long: Formate-dependent phosphoribosylglycinamide formyltransferase (389 aa).

Residues 12-13 (EL) and glutamate 72 contribute to the N(1)-(5-phospho-beta-D-ribosyl)glycinamide site. ATP contacts are provided by residues arginine 104, lysine 145, 150–155 (SSGKGQ), 185–188 (EEFI), and glutamate 193. An ATP-grasp domain is found at 109 to 301 (DLAAKELGLK…EFELHLRAVL (193 aa)). The Mg(2+) site is built by glutamate 258 and glutamate 271. N(1)-(5-phospho-beta-D-ribosyl)glycinamide-binding positions include aspartate 278, lysine 350, and 357-358 (RR).

The protein belongs to the PurK/PurT family. In terms of assembly, homodimer.

It carries out the reaction N(1)-(5-phospho-beta-D-ribosyl)glycinamide + formate + ATP = N(2)-formyl-N(1)-(5-phospho-beta-D-ribosyl)glycinamide + ADP + phosphate + H(+). The protein operates within purine metabolism; IMP biosynthesis via de novo pathway; N(2)-formyl-N(1)-(5-phospho-D-ribosyl)glycinamide from N(1)-(5-phospho-D-ribosyl)glycinamide (formate route): step 1/1. Its function is as follows. Involved in the de novo purine biosynthesis. Catalyzes the transfer of formate to 5-phospho-ribosyl-glycinamide (GAR), producing 5-phospho-ribosyl-N-formylglycinamide (FGAR). Formate is provided by PurU via hydrolysis of 10-formyl-tetrahydrofolate. The protein is Formate-dependent phosphoribosylglycinamide formyltransferase of Phocaeicola vulgatus (strain ATCC 8482 / DSM 1447 / JCM 5826 / CCUG 4940 / NBRC 14291 / NCTC 11154) (Bacteroides vulgatus).